Reading from the N-terminus, the 315-residue chain is MTTMQLDSDGRLRHLLTLEGLPRTTLLQLLDRAGQIRDAAVGRVGKRSVLAGTAVCTLFFEPSTRTRSSFHLAAQRLGADVLNFDASTSSTRKGETARDTLKNLEAMGVRGFVVRHPDDGAVEALAAAAGEGTALINAGDGRSAHPTQGLLDMLTLRQAKGTDFSKLKVVIVGDVKHSRVARSDLHALRTLGAGEIRVCGPVSLLPDDGMLEGCVVGQDFDAMLEGADALMMLRLQRERMEEGLVPSLEQYHTEYGLTCERLARAGRDAAVLHPGPINRGVEITDEVADGAQSCVLRQVANGVAVRMAVLETLLG.

R65 and T66 together coordinate carbamoyl phosphate. K93 is an L-aspartate binding site. Carbamoyl phosphate is bound by residues R115, H145, and Q148. R179 and R234 together coordinate L-aspartate. Residues G275 and P276 each contribute to the carbamoyl phosphate site.

Belongs to the aspartate/ornithine carbamoyltransferase superfamily. ATCase family. Heterododecamer (2C3:3R2) of six catalytic PyrB chains organized as two trimers (C3), and six regulatory PyrI chains organized as three dimers (R2).

It carries out the reaction carbamoyl phosphate + L-aspartate = N-carbamoyl-L-aspartate + phosphate + H(+). It functions in the pathway pyrimidine metabolism; UMP biosynthesis via de novo pathway; (S)-dihydroorotate from bicarbonate: step 2/3. Catalyzes the condensation of carbamoyl phosphate and aspartate to form carbamoyl aspartate and inorganic phosphate, the committed step in the de novo pyrimidine nucleotide biosynthesis pathway. The chain is Aspartate carbamoyltransferase catalytic subunit from Xanthomonas axonopodis pv. citri (strain 306).